Reading from the N-terminus, the 198-residue chain is COMM domain-containing protein 9 (198 aa).

Alanine 2 bears the N-acetylalanine mark. The 75-residue stretch at 122 to 196 (RLVDLDWRVD…RIRDQLSAVA (75 aa)) folds into the COMM domain.

It belongs to the COMM domain-containing protein 9 family. As to quaternary structure, component of the commander complex consisting of the CCC subcomplex and the retriever subcomplex. Component of the CCC (COMMD/CCDC22/CCDC93) subcomplex consisting of COMMD1, COMMD2, COMMD3, COMMD4, COMMD5, COMMD6, COMMD7, COMMD8, COMMD9, COMMD10, CCDC22 and CCDC93; within the complex forms a heterodimer with COMMD7. Interacts with RELB and NFKB1/p105. Interacts with CCDC22, CCDC93, SCNN1B, CUL1. Ubiquitous.

It localises to the nucleus. The protein resides in the cytoplasmic vesicle. Functionally, scaffold protein in the commander complex that is essential for endosomal recycling of transmembrane cargos; the commander complex is composed of the CCC subcomplex and the retriever subcomplex. May modulate activity of cullin-RING E3 ubiquitin ligase (CRL) complexes. May down-regulate activation of NF-kappa-B. Modulates Na(+) transport in epithelial cells by regulation of apical cell surface expression of amiloride-sensitive sodium channel (ENaC) subunits. This chain is COMM domain-containing protein 9 (COMMD9), found in Homo sapiens (Human).